The primary structure comprises 114 residues: Nucleoid-associated protein SGR_3378 (114 aa).

This sequence belongs to the YbaB/EbfC family. Homodimer.

It is found in the cytoplasm. Its subcellular location is the nucleoid. In terms of biological role, binds to DNA and alters its conformation. May be involved in regulation of gene expression, nucleoid organization and DNA protection. The chain is Nucleoid-associated protein SGR_3378 from Streptomyces griseus subsp. griseus (strain JCM 4626 / CBS 651.72 / NBRC 13350 / KCC S-0626 / ISP 5235).